A 558-amino-acid polypeptide reads, in one-letter code: Glucose-6-phosphate isomerase (558 aa).

A2 is modified (N-acetylalanine). K12 carries the post-translational modification N6-acetyllysine. An N6-(2-hydroxyisobutyryl)lysine modification is found at K34. Position 107 is a phosphoserine (S107). Phosphothreonine is present on T109. The residue at position 142 (K142) is an N6-acetyllysine. 159–160 (GS) provides a ligand contact to D-glucose 6-phosphate. The residue at position 185 (S185) is a Phosphoserine; by CK2. 210 to 215 (SKTFTT) is a binding site for D-glucose 6-phosphate. T250 is subject to Phosphothreonine. Residues Q354, E358, and H389 each contribute to the D-glucose 6-phosphate site. Catalysis depends on E358, which acts as the Proton donor. Residue H389 is part of the active site. Position 454 is an N6-acetyllysine; alternate (K454). The residue at position 454 (K454) is an N6-malonyllysine; alternate. An N6-succinyllysine; alternate modification is found at K454. Phosphoserine is present on S455. K519 is a binding site for D-glucose 6-phosphate. K519 is an active-site residue.

The protein belongs to the GPI family. As to quaternary structure, homodimer; in the catalytically active form. Monomer in the secreted form. Phosphorylation at Ser-185 by CK2 has been shown to decrease enzymatic activity and may contribute to secretion by a non-classical secretory pathway. In terms of processing, ISGylated.

It is found in the cytoplasm. The protein localises to the secreted. It carries out the reaction alpha-D-glucose 6-phosphate = beta-D-fructose 6-phosphate. It participates in carbohydrate degradation; glycolysis; D-glyceraldehyde 3-phosphate and glycerone phosphate from D-glucose: step 2/4. Strongly inhibited by erythrose 4-phosphate. Functionally, in the cytoplasm, catalyzes the conversion of glucose-6-phosphate to fructose-6-phosphate, the second step in glycolysis, and the reverse reaction during gluconeogenesis. Besides it's role as a glycolytic enzyme, also acts as a secreted cytokine: acts as an angiogenic factor (AMF) that stimulates endothelial cell motility. Acts as a neurotrophic factor, neuroleukin, for spinal and sensory neurons. It is secreted by lectin-stimulated T-cells and induces immunoglobulin secretion. The sequence is that of Glucose-6-phosphate isomerase from Homo sapiens (Human).